The chain runs to 625 residues: Phosphomethylpyrimidine synthase (625 aa).

Residues N230, M259, Y288, H324, 344–346 (SRG), 385–388 (DGLR), and E424 each bind substrate. H428 serves as a coordination point for Zn(2+). Residue Y451 participates in substrate binding. A Zn(2+)-binding site is contributed by H492. C572, C575, and C580 together coordinate [4Fe-4S] cluster.

This sequence belongs to the ThiC family. As to quaternary structure, homodimer. [4Fe-4S] cluster serves as cofactor.

The enzyme catalyses 5-amino-1-(5-phospho-beta-D-ribosyl)imidazole + S-adenosyl-L-methionine = 4-amino-2-methyl-5-(phosphooxymethyl)pyrimidine + CO + 5'-deoxyadenosine + formate + L-methionine + 3 H(+). The protein operates within cofactor biosynthesis; thiamine diphosphate biosynthesis. In terms of biological role, catalyzes the synthesis of the hydroxymethylpyrimidine phosphate (HMP-P) moiety of thiamine from aminoimidazole ribotide (AIR) in a radical S-adenosyl-L-methionine (SAM)-dependent reaction. This chain is Phosphomethylpyrimidine synthase, found in Xanthomonas axonopodis pv. citri (strain 306).